The following is a 213-amino-acid chain: MQKSNLYSKLLKSPDDAPVFISEKLELDFISHAYSLGLFPWTSNPVTWWCPSPRMVLFPDEIHIQKSIKKALKTYEIRLDYDFALLIKHCSLRKKTWINQEFIETYTKLFEQNLAHSVEVYENDEFIGGLYGLIIGKVFFGESMISLKKDASKIALIKLCEILKPYDFLIDCQVPNEHLKFMGAKEMIKKDFLKILEKKVSLESGFENFQNLL.

It belongs to the L/F-transferase family.

Its subcellular location is the cytoplasm. It carries out the reaction N-terminal L-lysyl-[protein] + L-leucyl-tRNA(Leu) = N-terminal L-leucyl-L-lysyl-[protein] + tRNA(Leu) + H(+). The catalysed reaction is N-terminal L-arginyl-[protein] + L-leucyl-tRNA(Leu) = N-terminal L-leucyl-L-arginyl-[protein] + tRNA(Leu) + H(+). The enzyme catalyses L-phenylalanyl-tRNA(Phe) + an N-terminal L-alpha-aminoacyl-[protein] = an N-terminal L-phenylalanyl-L-alpha-aminoacyl-[protein] + tRNA(Phe). Its function is as follows. Functions in the N-end rule pathway of protein degradation where it conjugates Leu, Phe and, less efficiently, Met from aminoacyl-tRNAs to the N-termini of proteins containing an N-terminal arginine or lysine. The chain is Leucyl/phenylalanyl-tRNA--protein transferase from Campylobacter lari (strain RM2100 / D67 / ATCC BAA-1060).